Reading from the N-terminus, the 188-residue chain is ATP synthase subunit b (188 aa).

The helical transmembrane segment at 19 to 39 (LPAVYDIVWSAVVFVVLLVVI) threads the bilayer.

Belongs to the ATPase B chain family. As to quaternary structure, F-type ATPases have 2 components, F(1) - the catalytic core - and F(0) - the membrane proton channel. F(1) has five subunits: alpha(3), beta(3), gamma(1), delta(1), epsilon(1). F(0) has three main subunits: a(1), b(2) and c(10-14). The alpha and beta chains form an alternating ring which encloses part of the gamma chain. F(1) is attached to F(0) by a central stalk formed by the gamma and epsilon chains, while a peripheral stalk is formed by the delta and b chains.

Its subcellular location is the cell membrane. In terms of biological role, f(1)F(0) ATP synthase produces ATP from ADP in the presence of a proton or sodium gradient. F-type ATPases consist of two structural domains, F(1) containing the extramembraneous catalytic core and F(0) containing the membrane proton channel, linked together by a central stalk and a peripheral stalk. During catalysis, ATP synthesis in the catalytic domain of F(1) is coupled via a rotary mechanism of the central stalk subunits to proton translocation. Functionally, component of the F(0) channel, it forms part of the peripheral stalk, linking F(1) to F(0). In Clavibacter michiganensis subsp. michiganensis (strain NCPPB 382), this protein is ATP synthase subunit b.